The chain runs to 169 residues: Myosin regulatory light chain 11 (169 aa).

Residue Ala2 is modified to N,N,N-trimethylalanine. 2 positions are modified to phosphoserine: Ser15 and Ser16. Phosphothreonine occurs at positions 25 and 35. The 36-residue stretch at 25–60 (TQIQEFKEAFTVIDQNRDGIIDKEDLRDTFAAMGRL) folds into the EF-hand 1 domain. Ca(2+)-binding residues include Asp38, Asn40, Asp42, and Asp49. Ser75 carries the phosphoserine modification. 2 consecutive EF-hand domains span residues 95-130 (DPED…QCDR) and 131-166 (FSQE…GDAK). Residue Thr101 is modified to Phosphothreonine.

As to quaternary structure, myosin is a hexamer of 2 heavy chains and 4 light chains. As to expression, expressed in fetal and adult skeletal muscle.

Its function is as follows. Myosin regulatory subunit that plays an essential role to maintain muscle integrity during early development. Plays a role in muscle contraction. This chain is Myosin regulatory light chain 11, found in Homo sapiens (Human).